The following is a 263-amino-acid chain: Small ribosomal subunit protein eS4 (263 aa).

The S4 RNA-binding domain maps to 42–104 (LPLVIFLRNR…TNELFRLIYD (63 aa)).

Belongs to the eukaryotic ribosomal protein eS4 family.

In Bombyx mori (Silk moth), this protein is Small ribosomal subunit protein eS4 (RpS4).